The primary structure comprises 467 residues: UDP-N-acetylmuramate--L-alanine ligase (467 aa).

Residue 114-120 (GTHGKTT) participates in ATP binding.

Belongs to the MurCDEF family.

The protein localises to the cytoplasm. The enzyme catalyses UDP-N-acetyl-alpha-D-muramate + L-alanine + ATP = UDP-N-acetyl-alpha-D-muramoyl-L-alanine + ADP + phosphate + H(+). It functions in the pathway cell wall biogenesis; peptidoglycan biosynthesis. In terms of biological role, cell wall formation. This is UDP-N-acetylmuramate--L-alanine ligase from Rhodopseudomonas palustris (strain BisB5).